We begin with the raw amino-acid sequence, 1674 residues long: Kinesin-like protein KIF14 (1674 aa).

The tract at residues 1–391 (MSVHTSHSRH…TEPDSLKVEN (391 aa)) is required for PRC1-binding. 2 disordered regions span residues 132–158 (ETLNPVGGNPGSDSASQASRTEAKGVN) and 171–374 (KDSN…PEEN). Polar residues-rich tracts occupy residues 142-151 (GSDSASQASR) and 202-214 (SRAPVGSQRQTEA). Ser-257 is modified (phosphoserine). Thr-262 bears the Phosphothreonine mark. Residues 267-279 (VLEHRWTPRHDPP) show a composition bias toward basic and acidic residues. Residues 302 to 311 (TFRSASSESR) show a composition bias toward polar residues. Over residues 317–329 (VPEHRWTPRHDLP) the composition is skewed to basic and acidic residues. The segment at 391 to 772 (NSQVTVAVRV…AAQRSNRNID (382 aa)) is required for microtubule-binding with high affinity. One can recognise a Kinesin motor domain in the interval 393–736 (QVTVAVRVRP…LRYATQARLI (344 aa)). An ATP-binding site is contributed by 482–489 (GQTGSGKS). The stretch at 743-826 (NEDMNAKLIR…QETKELQKAG (84 aa)) forms a coiled coil. Positions 860 to 911 (TTVGKHTPSSSHDIQLSGVLIADDHCTIRNFGGTVSIVPAGEAKTYVNGTHI) constitute an FHA domain. The required for CIT-binding stretch occupies residues 936–1674 (PVEVQKGKKL…DCTPNRIQWV (739 aa)). Residues 961–1110 (EFAKNELLTA…VQMLQENRGN (150 aa)) adopt a coiled-coil conformation. Phosphoserine occurs at positions 973 and 1326. Residues 1618-1674 (GLSKPWESCSSNSKEEQCKSDRADCGKSGPRRACEPHGDATPAVSSGDCTPNRIQWV) are disordered. Basic and acidic residues predominate over residues 1630–1642 (SKEEQCKSDRADC). The span at 1660–1674 (AVSSGDCTPNRIQWV) shows a compositional bias: polar residues.

It belongs to the TRAFAC class myosin-kinesin ATPase superfamily. Kinesin family. Directly interacts with PRC1 within a complex also containing KIF4A, KIF20A and KIF23; targets to the central spindle. Directly interacts with CIT depending on the activation state of the kinase (stronger interaction with the kinase-dead form); targets to the midbody. Interacts with ARRB2; the interaction is detected in the nucleus upon OR1D2 stimulation. Interacts with AKT1; the interaction is detected in the plasma membrane upon INS stimulation and promotes AKT1 phosphorylation. Interacts with SVIL; at midbody during cytokinesis. Interacts with RADIL (via PDZ domain); recruits RADIL to the microtubule network restricting RADIL from interaction with activated RAP1A.

It is found in the nucleus. The protein resides in the cytoplasm. The protein localises to the cytoskeleton. Its subcellular location is the spindle. It localises to the midbody. Its function is as follows. Microtubule motor protein that binds to microtubules with high affinity through each tubulin heterodimer and has an ATPase activity. Plays a role in many processes like cell division, cytokinesis and also in cell proliferation and apoptosis. During cytokinesis, targets to central spindle and midbody through its interaction with PRC1 and CIT respectively. Regulates cell growth through regulation of cell cycle progression and cytokinesis. During cell cycle progression acts through SCF-dependent proteasomal ubiquitin-dependent protein catabolic process which controls CDKN1B degradation, resulting in positive regulation of cyclins, including CCNE1, CCND1 and CCNB1. During late neurogenesis, regulates the cerebellar and cerebral cortex development and olfactory bulb development through regulation of apoptosis, cell proliferation and cell division. Also is required for chromosome congression and alignment during mitotic cell cycle process. Regulates cell spreading, focal adhesion dynamics, and cell migration through its interaction with RADIL resulting in regulation of RAP1A-mediated inside-out integrin activation by tethering RADIL on microtubules. This chain is Kinesin-like protein KIF14, found in Mus musculus (Mouse).